The chain runs to 742 residues: Condensin complex subunit 2 (742 aa).

4 disordered regions span residues Met1–Ser62, Gln151–Arg172, Phe452–Arg473, and Ile564–Ser604. Positions Ala21 to Arg39 are enriched in basic and acidic residues. Residues Leu53–Ser62 are compositionally biased toward polar residues. The span at Glu154–Asp165 shows a compositional bias: acidic residues. Polar residues-rich tracts occupy residues Phe452 to Ser470 and Pro592 to Ser604.

It belongs to the CND2 (condensin subunit 2) family. As to quaternary structure, component of the condensin complex, which contains the cut14/smc2 and cut3/smc2 heterodimer, and three non SMC subunits that probably regulate the complex: cnd1, cnd2 and cnd3.

The protein resides in the nucleus. The protein localises to the cytoplasm. It is found in the chromosome. Functionally, regulatory subunit of the condensin complex, a complex required for conversion of interphase chromatin into mitotic-like condense chromosomes. The condensin complex probably introduces positive supercoils into relaxed DNA in the presence of type I topoisomerases and converts nicked DNA into positive knotted forms in the presence of type II topoisomerases. The condensin complex probably also plays a role during interphase in processes such as DNA repair. This Schizosaccharomyces pombe (strain 972 / ATCC 24843) (Fission yeast) protein is Condensin complex subunit 2 (cnd2).